The following is a 378-amino-acid chain: Ribosomal RNA large subunit methyltransferase G (378 aa).

The protein belongs to the methyltransferase superfamily. RlmG family.

It localises to the cytoplasm. It carries out the reaction guanosine(1835) in 23S rRNA + S-adenosyl-L-methionine = N(2)-methylguanosine(1835) in 23S rRNA + S-adenosyl-L-homocysteine + H(+). Specifically methylates the guanine in position 1835 (m2G1835) of 23S rRNA. This is Ribosomal RNA large subunit methyltransferase G from Salmonella gallinarum (strain 287/91 / NCTC 13346).